The chain runs to 249 residues: Derlin-2.1 (249 aa).

The Cytoplasmic portion of the chain corresponds to 1–21; it reads MAQAVEEWYRQMPIITRSYLT. The helical transmembrane segment at 22–42 threads the bilayer; sequence AAVVTTVGCTLEIISPYHLYL. Topologically, residues 43 to 96 are lumenal; sequence NPKLVVQHYEIWRLVTNFLYFRKMDLDFLFHMFFLARYCKLLEENSFRGRTADF. A helical transmembrane segment spans residues 97-117; that stretch reads FYMLLFGATVLTSIVLIGGMI. Residues 118–122 are Cytoplasmic-facing; the sequence is PYISE. Residues 123-143 traverse the membrane as a helical segment; that stretch reads TFARILFLSNSLTFMMVYVWS. At 144–152 the chain is on the lumenal side; sequence KHNPFIHMS. The helical transmembrane segment at 153–173 threads the bilayer; sequence FLGLFTFTAAYLPWVLLGFSI. The Cytoplasmic portion of the chain corresponds to 174 to 249; that stretch reads LVGSSTWVDL…GAMGLDPQAQ (76 aa).

This sequence belongs to the derlin family. In terms of tissue distribution, expressed in roots, stalks, leaves, embryo and endosperm.

It localises to the endoplasmic reticulum membrane. In terms of biological role, may be involved in the degradation process of specific misfolded endoplasmic reticulum (ER) luminal proteins. This Zea mays (Maize) protein is Derlin-2.1 (DER2.1).